The primary structure comprises 524 residues: Probable inorganic phosphate transporter 1-2 (524 aa).

At 1-24 (MAEQQLGVLKALDVAKTQLYHFTA) the chain is on the cytoplasmic side. A helical transmembrane segment spans residues 25 to 45 (IVIAGMGFFTDAYDLFCVSLV). The Extracellular segment spans residues 46-70 (TKLLGRIYYFNPESAKPGSLPPHVA). Residues 71–91 (AAVNGVALCGTLSGQLFFGWL) traverse the membrane as a helical segment. Topologically, residues 92-99 (GDKLGRKK) are cytoplasmic. Residues 100–120 (VYGLTLIMMILCSVASGLSFG) form a helical membrane-spanning segment. Topologically, residues 121 to 131 (NEAKGVMTTLC) are extracellular. A helical membrane pass occupies residues 132–152 (FFRFWLGFGIGGDYPLSATIM). Topologically, residues 153–161 (SEYANKKTR) are cytoplasmic. The helical transmembrane segment at 162-182 (GAFIAAVFAMQGVGILAGGFV) threads the bilayer. Over 183 to 211 (ALAVSSIFDKKFPAPTYAVNRALSTPPQV) the chain is Extracellular. Residues 212-232 (DYIWRIIVMFGALPAALTYYW) traverse the membrane as a helical segment. Residues 233 to 292 (RMKMPETARYTALVAKNIKQATADMSKVLQTDIELEERVEDDVKDPRQNYGLFSKEFLRR) are Cytoplasmic-facing. The chain crosses the membrane as a helical span at residues 293–313 (HGLHLLGTTSTWFLLDIAFYS). Residues 314 to 348 (QNLFQKDIFSAIGWIPKAATMNATHEVFRIARAQT) lie on the Extracellular side of the membrane. A helical membrane pass occupies residues 349–369 (LIALCSTVPGYWFTVAFIDTI). Residues 370–371 (GR) lie on the Cytoplasmic side of the membrane. The chain crosses the membrane as a helical span at residues 372–392 (FKIQLNGFFMMTVFMFAIAFP). Residues 393–402 (YNHWIKPENR) are Extracellular-facing. The chain crosses the membrane as a helical span at residues 403 to 423 (IGFVVMYSLTFFFANFGPNAT). At 424–441 (TFIVPAEIFPARLRSTCH) the chain is on the cytoplasmic side. The chain crosses the membrane as a helical span at residues 442 to 462 (GISAAAGKAGAIIGAFGFLYA). Residues 463-484 (AQNQDKAKVDAGYPPGIGVKNS) lie on the Extracellular side of the membrane. A helical transmembrane segment spans residues 485–505 (LIVLGVLNFIGMLFTFLVPEP). The Cytoplasmic portion of the chain corresponds to 506-524 (KGKSLEELSGEAEVSHDEK).

The protein belongs to the major facilitator superfamily. Phosphate:H(+) symporter (TC 2.A.1.9) family. As to expression, root specific, especially in trichoblasts. In mature plants, localized in root cortical cells and young lateral roots.

Its subcellular location is the membrane. In terms of biological role, high-affinity transporter for external inorganic phosphate. This is Probable inorganic phosphate transporter 1-2 (PHT1-2) from Arabidopsis thaliana (Mouse-ear cress).